A 347-amino-acid chain; its full sequence is MSFVLSRMAACGGSCKNKVTVSKPVWDFLSKETPARLARLREEHRVSILIDGETSDIYVLQLSPQGPPPAPPNGLYLARKALKGLLKEAEKELKKAQRQGELMGCLALGGGGEHPELHRPGPPPLRAAPLLPPGARGLPPPPPPLPPPLPPRLREDAEEQETTCPICLGEIQNAKTLEKCRHSFCEGCITRALQVKKACPMCGRFYGQLVGNQPQNGRMLVSKDATLLLPSYEKYGTIVIQYVFPPGVQGAEHPNPGVRYPGTTRVAYLPDCPEGNKVLTLFRKAFDQRLTFTIGTSMTTGRPNVITWNDIHHKTSCTGGPQLFGYPDPTYLTRVQEELRAKGITDD.

The tract at residues 111–157 is disordered; the sequence is GGEHPELHRPGPPPLRAAPLLPPGARGLPPPPPPLPPPLPPRLREDA. The segment covering 120-151 has biased composition (pro residues); the sequence is PGPPPLRAAPLLPPGARGLPPPPPPLPPPLPP. An RING-type zinc finger spans residues 164 to 205; that stretch reads CPICLGEIQNAKTLEKCRHSFCEGCITRALQVKKACPMCGRF.

Belongs to the Deltex family. As to quaternary structure, homodimer. May form a heterodimer with other members of the Deltex family. Interacts with NOTCH1. As to expression, strongly expressed in testis and brain. Weakly expressed in kidney.

The protein resides in the cytoplasm. The enzyme catalyses S-ubiquitinyl-[E2 ubiquitin-conjugating enzyme]-L-cysteine + [acceptor protein]-L-lysine = [E2 ubiquitin-conjugating enzyme]-L-cysteine + N(6)-ubiquitinyl-[acceptor protein]-L-lysine.. It functions in the pathway protein modification; protein ubiquitination. In terms of biological role, regulator of Notch signaling, a signaling pathway involved in cell-cell communications that regulates a broad spectrum of cell-fate determinations. Probably acts both as a positive and negative regulator of Notch, depending on the developmental and cell context. Functions as a ubiquitin ligase protein in vitro, suggesting that it may regulate the Notch pathway via some ubiquitin ligase activity. This is Probable E3 ubiquitin-protein ligase DTX3 (Dtx3) from Mus musculus (Mouse).